The sequence spans 114 residues: Nucleoid-associated protein CKL_3826 (114 aa).

Belongs to the YbaB/EbfC family. In terms of assembly, homodimer.

It is found in the cytoplasm. The protein resides in the nucleoid. Its function is as follows. Binds to DNA and alters its conformation. May be involved in regulation of gene expression, nucleoid organization and DNA protection. This is Nucleoid-associated protein CKL_3826 from Clostridium kluyveri (strain ATCC 8527 / DSM 555 / NBRC 12016 / NCIMB 10680 / K1).